Consider the following 284-residue polypeptide: 2-dehydro-3-deoxyphosphooctonate aldolase (284 aa).

It belongs to the KdsA family.

Its subcellular location is the cytoplasm. The catalysed reaction is D-arabinose 5-phosphate + phosphoenolpyruvate + H2O = 3-deoxy-alpha-D-manno-2-octulosonate-8-phosphate + phosphate. It participates in carbohydrate biosynthesis; 3-deoxy-D-manno-octulosonate biosynthesis; 3-deoxy-D-manno-octulosonate from D-ribulose 5-phosphate: step 2/3. The protein operates within bacterial outer membrane biogenesis; lipopolysaccharide biosynthesis. In Vibrio vulnificus (strain CMCP6), this protein is 2-dehydro-3-deoxyphosphooctonate aldolase.